We begin with the raw amino-acid sequence, 340 residues long: Phenylalanine--tRNA ligase alpha subunit (340 aa).

Glu-255 lines the Mg(2+) pocket.

It belongs to the class-II aminoacyl-tRNA synthetase family. Phe-tRNA synthetase alpha subunit type 1 subfamily. Tetramer of two alpha and two beta subunits. Mg(2+) serves as cofactor.

Its subcellular location is the cytoplasm. The catalysed reaction is tRNA(Phe) + L-phenylalanine + ATP = L-phenylalanyl-tRNA(Phe) + AMP + diphosphate + H(+). The sequence is that of Phenylalanine--tRNA ligase alpha subunit from Heliobacterium modesticaldum (strain ATCC 51547 / Ice1).